The sequence spans 743 residues: Fork head transcription factor 1 (743 aa).

The region spanning 39–94 (VTMGRKASNSSDCDVHLGDTKAISRQHAKIFYSFPNQRFEISVMGKNGAFVDGEFV) is the FHA domain. Disordered regions lie at residues 214-291 (QPPK…ATQK), 411-450 (GISAGKTEQLNPQKETSRSKTHTSRGENVEDRPQSLLQNG), and 529-743 (QMQG…SSYT). The segment covering 221-230 (VSPSSIQRLS) has biased composition (polar residues). A DNA-binding region (fork-head) is located at residues 291-385 (KPNLSYANLI…EGNFFRRTKK (95 aa)). Residues 434–443 (SRGENVEDRP) show a composition bias toward basic and acidic residues. Residues 529–539 (QMQGPQQVQQQ) show a composition bias toward low complexity. The span at 562–576 (NITSPSPSISVTQRP) shows a compositional bias: polar residues. Residues 614-624 (SAGPSSVRSSS) are compositionally biased toward low complexity. Polar residues-rich tracts occupy residues 625 to 643 (YNSTASESKSEITSHQNLH), 670 to 686 (TGNQGQRMNSIGNASSF), and 695 to 726 (ENGSFDTNAKNGNNVDDSSSVRGMNLPSNSSD).

The protein resides in the nucleus. Functionally, acts as a transcriptional activator for ribosomal protein genes (RPG) that contain a HomolE UAS (upstream activating sequence) in addition to a HomolD promoter element; HomolD plays the role of a TATA box in RPG promoters that do not contain a canonical TATA sequence. Binds to HomolE elements with consensus sequence 3'-ACCCTACCCT-5' (or its inverted form AGGGTAGGGT). This Schizosaccharomyces pombe (strain 972 / ATCC 24843) (Fission yeast) protein is Fork head transcription factor 1.